The following is a 195-amino-acid chain: MAPAASRLRAEAGLGALPRRALAQYLLFLRLYPVLTKAATSGILSALGNFLAQMIEKKRKKENSRSLDVGGPLRYAVYGFFFTGPLSHFFYFFMEHWIPPEVPLAGLRRLLLDRLVFAPAFLMLFFLIMNFLEGKDASAFAAKMRGGFWPALRMNWRVWTPLQFININYVPLKFRVLFANLAALFWYAYLASLGK.

At 1–30 (MAPAASRLRAEAGLGALPRRALAQYLLFLR) the chain is on the cytoplasmic side. A helical transmembrane segment spans residues 31–51 (LYPVLTKAATSGILSALGNFL). The Peroxisomal portion of the chain corresponds to 52–75 (AQMIEKKRKKENSRSLDVGGPLRY). The chain crosses the membrane as a helical span at residues 76-96 (AVYGFFFTGPLSHFFYFFMEH). The Cytoplasmic segment spans residues 97-114 (WIPPEVPLAGLRRLLLDR). The helical transmembrane segment at 115 to 135 (LVFAPAFLMLFFLIMNFLEGK) threads the bilayer. Residues 136–173 (DASAFAAKMRGGFWPALRMNWRVWTPLQFININYVPLK) are Peroxisomal-facing. The helical transmembrane segment at 174-194 (FRVLFANLAALFWYAYLASLG) threads the bilayer.

Belongs to the peroxisomal membrane protein PXMP2/4 family. Interacts with PEX19 and SIVA1.

The protein localises to the peroxisome membrane. Functionally, seems to be involved in pore-forming activity and may contribute to the unspecific permeability of the peroxisomal membrane. The chain is Peroxisomal membrane protein 2 (PXMP2) from Homo sapiens (Human).